A 228-amino-acid polypeptide reads, in one-letter code: Probable C4-dicarboxylate response regulator DctR (228 aa).

One can recognise a Response regulatory domain in the interval 7–123 (TVLLIEDDPM…RMKQALEQYR (117 aa)). Residue aspartate 58 is modified to 4-aspartylphosphate. Residues 180–199 (AEEVADGVGIARVTARRYLE) constitute a DNA-binding region (H-T-H motif).

Post-translationally, phosphorylated by DctS.

The protein localises to the cytoplasm. Functionally, member of the two-component regulatory system DctS/DctR. Essential for expression of DctP. This is Probable C4-dicarboxylate response regulator DctR (dctR) from Priestia megaterium (Bacillus megaterium).